The sequence spans 475 residues: MSPKTETKASVGFKAGVKDYRLTYYTPEYETLATDILAAFRVTPQPGVPPEEAGAAVAAESSTGTWTTVWTDGLTSLDRYKGRCYHIEPVAGEENQYIAYVAYPLDLFEEGSVTNMFTSIVGNVFGFKALRALRLEDLRIPPAYSKTFQGPPHGIQVERDKLNKYGRPLLGCTIKPKLGLSAKNYGRAVYECLRGGLDFTKDDENVNSQPFMRWRDRFLFCAEAIYKAQAETGEIKGHYLNATAGTSEEMMKRAVCARELGVPIVMHDYLTGGFTANTSLAHYCRDNGLLLHIHRAMHAVIDRQRNHGIHFRVLAKALRMSGGDHIHAGTVVGKLEGERDVTLGFVDLLRDDFIEKDRSRGIYFTQDWVSMPGVLPVASGGIHVWHMPALTEIFGDDSVLQFGGGTLGHPWGNAPGAVANRVALEACVQARNEGRDLAREGNEVIREASKWSPELAAACEVWKEIKFEFEAMDVL.

Residues 1-2 constitute a propeptide that is removed on maturation; sequence MS. Position 3 is an N-acetylproline (Pro-3). Lys-14 carries the post-translational modification N6,N6,N6-trimethyllysine. Residues Asn-123 and Thr-173 each contribute to the substrate site. Lys-175 functions as the Proton acceptor in the catalytic mechanism. Residue Lys-177 participates in substrate binding. Positions 201, 203, and 204 each coordinate Mg(2+). Lys-201 is subject to N6-carboxylysine. His-294 functions as the Proton acceptor in the catalytic mechanism. Positions 295, 327, and 379 each coordinate substrate.

Belongs to the RuBisCO large chain family. Type I subfamily. In terms of assembly, heterohexadecamer of 8 large chains and 8 small chains. Requires Mg(2+) as cofactor.

The protein localises to the plastid. It is found in the chloroplast. It carries out the reaction 2 (2R)-3-phosphoglycerate + 2 H(+) = D-ribulose 1,5-bisphosphate + CO2 + H2O. The enzyme catalyses D-ribulose 1,5-bisphosphate + O2 = 2-phosphoglycolate + (2R)-3-phosphoglycerate + 2 H(+). Functionally, ruBisCO catalyzes two reactions: the carboxylation of D-ribulose 1,5-bisphosphate, the primary event in carbon dioxide fixation, as well as the oxidative fragmentation of the pentose substrate in the photorespiration process. Both reactions occur simultaneously and in competition at the same active site. The protein is Ribulose bisphosphate carboxylase large chain of Nymphaea alba (White water-lily).